A 397-amino-acid chain; its full sequence is 1-deoxy-D-xylulose 5-phosphate reductoisomerase (397 aa).

6 residues coordinate NADPH: Thr-10, Gly-11, Ser-12, Ile-13, Asn-38, and Asn-125. Lys-126 contacts 1-deoxy-D-xylulose 5-phosphate. Glu-127 is a binding site for NADPH. Asp-151 provides a ligand contact to Mn(2+). 1-deoxy-D-xylulose 5-phosphate contacts are provided by Ser-152, Glu-153, Ser-187, and His-210. Glu-153 is a Mn(2+) binding site. Residue Gly-216 coordinates NADPH. 1-deoxy-D-xylulose 5-phosphate contacts are provided by Ser-223, Asn-228, Lys-229, and Glu-232. Glu-232 provides a ligand contact to Mn(2+).

Belongs to the DXR family. In terms of assembly, homodimer. The cofactor is Mg(2+). It depends on Mn(2+) as a cofactor.

The catalysed reaction is 2-C-methyl-D-erythritol 4-phosphate + NADP(+) = 1-deoxy-D-xylulose 5-phosphate + NADPH + H(+). It functions in the pathway isoprenoid biosynthesis; isopentenyl diphosphate biosynthesis via DXP pathway; isopentenyl diphosphate from 1-deoxy-D-xylulose 5-phosphate: step 1/6. In terms of biological role, catalyzes the NADPH-dependent rearrangement and reduction of 1-deoxy-D-xylulose-5-phosphate (DXP) to 2-C-methyl-D-erythritol 4-phosphate (MEP). The polypeptide is 1-deoxy-D-xylulose 5-phosphate reductoisomerase (Blochmanniella pennsylvanica (strain BPEN)).